Consider the following 154-residue polypeptide: UPF0756 membrane protein RBAM_026200 (154 aa).

A run of 4 helical transmembrane segments spans residues 14-34 (AIALVAKNQSLLFAVGFLIVI), 54-74 (WGVTVITIAVLVPIATGDIGF), 87-107 (WIALGAGIAVALIAKNGLTLL), and 117-137 (LVIGTILAVALFGGVAVGPLI).

This sequence belongs to the UPF0756 family.

It is found in the cell membrane. The protein is UPF0756 membrane protein RBAM_026200 of Bacillus velezensis (strain DSM 23117 / BGSC 10A6 / LMG 26770 / FZB42) (Bacillus amyloliquefaciens subsp. plantarum).